Here is a 576-residue protein sequence, read N- to C-terminus: Arginine--tRNA ligase (576 aa).

A 'HIGH' region motif is present at residues 122–132 (PNVAKQMHVGH).

It belongs to the class-I aminoacyl-tRNA synthetase family. As to quaternary structure, monomer.

Its subcellular location is the cytoplasm. It carries out the reaction tRNA(Arg) + L-arginine + ATP = L-arginyl-tRNA(Arg) + AMP + diphosphate. The polypeptide is Arginine--tRNA ligase (Yersinia pseudotuberculosis serotype O:3 (strain YPIII)).